Here is a 127-residue protein sequence, read N- to C-terminus: Small ribosomal subunit protein uS11 (127 aa).

This sequence belongs to the universal ribosomal protein uS11 family. As to quaternary structure, part of the 30S ribosomal subunit. Interacts with proteins S7 and S18. Binds to IF-3.

Located on the platform of the 30S subunit, it bridges several disparate RNA helices of the 16S rRNA. Forms part of the Shine-Dalgarno cleft in the 70S ribosome. This Flavobacterium psychrophilum (strain ATCC 49511 / DSM 21280 / CIP 103535 / JIP02/86) protein is Small ribosomal subunit protein uS11.